The sequence spans 144 residues: Phospholipase A2 (144 aa).

The signal sequence occupies residues 1–15; the sequence is MKFLVLAALLTAGTA. A propeptide spans 16–22 (activation peptide); it reads ASGVSPT. Intrachain disulfides connect C33–C99, C49–C144, C51–C67, C66–C127, C73–C120, C83–C113, and C106–C118. The Ca(2+) site is built by Y50, G52, and G54. Residue H70 is part of the active site. D71 lines the Ca(2+) pocket. The active site involves D121.

Belongs to the phospholipase A2 family. As to quaternary structure, monomer or homodimer. Requires Ca(2+) as cofactor. Post-translationally, activated by trypsin cleavage in the duodenum. Can also be activated by thrombin or autocatalytically.

The protein localises to the secreted. The catalysed reaction is a 1,2-diacyl-sn-glycero-3-phosphocholine + H2O = a 1-acyl-sn-glycero-3-phosphocholine + a fatty acid + H(+). The enzyme catalyses 1,2-ditetradecanoyl-sn-glycero-3-phosphocholine + H2O = 1-tetradecanoyl-sn-glycero-3-phosphocholine + tetradecanoate + H(+). It carries out the reaction 1,2-dihexadecanoyl-sn-glycero-3-phosphocholine + H2O = 1-hexadecanoyl-sn-glycero-3-phosphocholine + hexadecanoate + H(+). It catalyses the reaction 1-hexadecanoyl-2-(9Z-octadecenoyl)-sn-glycero-3-phosphocholine + H2O = 1-hexadecanoyl-sn-glycero-3-phosphocholine + (9Z)-octadecenoate + H(+). The catalysed reaction is 1-hexadecanoyl-2-(5Z,8Z,11Z,14Z-eicosatetraenoyl)-sn-glycero-3-phosphocholine + H2O = 1-hexadecanoyl-sn-glycero-3-phosphocholine + (5Z,8Z,11Z,14Z)-eicosatetraenoate + H(+). The enzyme catalyses 1-hexadecanoyl-2-(9Z-octadecenoyl)-sn-glycero-3-phospho-(1'-sn-glycerol) + H2O = 1-hexadecanoyl-sn-glycero-3-phospho-(1'-sn-glycerol) + (9Z)-octadecenoate + H(+). It carries out the reaction N-hexadecanoyl-1,2-di-(9Z-octadecenoyl)-sn-glycero-3-phosphoethanolamine + H2O = N-hexadecanoyl-1-(9Z-octadecenoyl)-sn-glycero-3-phosphoethanolamine + (9Z)-octadecenoate + H(+). It catalyses the reaction 1-hexadecanoyl-2-(9Z,12Z-octadecadienoyl)-sn-glycero-3-phosphoethanolamine + H2O = 1-hexadecanoyl-sn-glycero-3-phosphoethanolamine + (9Z,12Z)-octadecadienoate + H(+). The catalysed reaction is N,1-dihexadecanoyl-2-(9Z,12Z-octadecadienoyl)-sn-glycero-3-phosphoethanolamine + H2O = N,1-dihexadecanoyl-sn-glycero-3-phosphoethanolamine + (9Z,12Z)-octadecadienoate + H(+). Functionally, secretory calcium-dependent phospholipase A2 that primarily targets dietary phospholipids in the intestinal tract. Hydrolyzes the ester bond of the fatty acyl group attached at sn-2 position of phospholipids (phospholipase A2 activity) with preference for phosphatidylethanolamines and phosphatidylglycerols over phosphatidylcholines. May play a role in the biosynthesis of N-acyl ethanolamines that regulate energy metabolism and inflammation in the intestinal tract. Hydrolyzes N-acyl phosphatidylethanolamines to N-acyl lysophosphatidylethanolamines, which are further cleaved by a lysophospholipase D to release N-acyl ethanolamines. May act in an autocrine and paracrine manner. Has anti-helminth activity in a process regulated by gut microbiota. Upon helminth infection of intestinal epithelia, directly affects phosphatidylethanolamine contents in the membrane of helminth larvae, likely controlling an array of phospholipid-mediated cellular processes such as membrane fusion and cell division while providing for better immune recognition, ultimately reducing larvae integrity and infectivity. This Oryctolagus cuniculus (Rabbit) protein is Phospholipase A2 (PLA2G1B).